A 262-amino-acid polypeptide reads, in one-letter code: Triosephosphate isomerase (262 aa).

13–15 (NWK) is a substrate binding site. H103 serves as the catalytic Electrophile. Catalysis depends on E175, which acts as the Proton acceptor. Substrate contacts are provided by residues G181, S221, and 242–243 (GG).

The protein belongs to the triosephosphate isomerase family. Homodimer.

It localises to the cytoplasm. It catalyses the reaction D-glyceraldehyde 3-phosphate = dihydroxyacetone phosphate. It functions in the pathway carbohydrate biosynthesis; gluconeogenesis. Its pathway is carbohydrate degradation; glycolysis; D-glyceraldehyde 3-phosphate from glycerone phosphate: step 1/1. Involved in the gluconeogenesis. Catalyzes stereospecifically the conversion of dihydroxyacetone phosphate (DHAP) to D-glyceraldehyde-3-phosphate (G3P). This is Triosephosphate isomerase from Corynebacterium efficiens (strain DSM 44549 / YS-314 / AJ 12310 / JCM 11189 / NBRC 100395).